The following is a 258-amino-acid chain: Arylamine N-acetyltransferase 1 (258 aa).

The Acyl-thioester intermediate role is filled by C59. Residue 97 to 98 participates in substrate binding; it reads IH. Catalysis depends on residues H98 and D113. CoA is bound by residues Y199 and T205.

The protein belongs to the arylamine N-acetyltransferase family.

Its subcellular location is the cytoplasm. It catalyses the reaction an arylamine + acetyl-CoA = an N-acetylarylamine + CoA. Its function is as follows. Participates in the detoxification of a plethora of hydrazine and arylamine drugs. The polypeptide is Arylamine N-acetyltransferase 1 (NAT1) (Felis catus (Cat)).